Reading from the N-terminus, the 208-residue chain is UPF0637 protein Bcer98_2662 (208 aa).

This sequence belongs to the UPF0637 family.

The polypeptide is UPF0637 protein Bcer98_2662 (Bacillus cytotoxicus (strain DSM 22905 / CIP 110041 / 391-98 / NVH 391-98)).